Consider the following 209-residue polypeptide: MARYTGPLCKLCRREGMKLYLKGERCYTDKCAFDRRPYAPGQHGQRRTKLTQYGIQLRAKQTVKRIYGILERQFERYVEKAMQKAGDTRENLIQILEARLDNVVYRMGFAINRRQARQLVNHGHFLVNGKKVNIPSYLLRPNDVVEVREKSRDLEVIKKAIEANKERSIVPWIEVDYDNYRGTFLRYPSLEEVTDLPVDLQTVIEFYSR.

4 residues coordinate Zn(2+): cysteine 9, cysteine 12, cysteine 26, and cysteine 31. The segment at 9-31 (CKLCRREGMKLYLKGERCYTDKC) adopts a C4-type zinc-finger fold. The 64-residue stretch at 98 to 161 (ARLDNVVYRM…RDLEVIKKAI (64 aa)) folds into the S4 RNA-binding domain.

This sequence belongs to the universal ribosomal protein uS4 family. In terms of assembly, part of the 30S ribosomal subunit. Contacts protein S5. The interaction surface between S4 and S5 is involved in control of translational fidelity. It depends on Zn(2+) as a cofactor.

One of the primary rRNA binding proteins, it binds directly to 16S rRNA where it nucleates assembly of the body of the 30S subunit. Its function is as follows. With S5 and S12 plays an important role in translational accuracy. This chain is Small ribosomal subunit protein uS4 (rpsD), found in Thermotoga maritima (strain ATCC 43589 / DSM 3109 / JCM 10099 / NBRC 100826 / MSB8).